The sequence spans 181 residues: MGLSFGKLFSRLFAKKEMRILMVGLDAAGKTTILYKLKLGEIVTTIPTIGFNVETVEYKNISFTVWDVGGQDKIRPLWRHYFQNTQGLIFVVDSNDRDRVVEARDELHRMLNEDELRDAVLLVFANKQDLPNAMNAAEITDKLGLHSLRQRHWYIQSTCATSGEGLYEGLDWLSNNIASKA.

The N-myristoyl glycine moiety is linked to residue G2. Residues 24–31 (GLDAAGKT), 67–71 (DVGGQ), and 126–129 (NKQD) contribute to the GTP site.

This sequence belongs to the small GTPase superfamily. Arf family. In terms of assembly, interacts with AGD7 and GDAP1. GDP-locked form interacts with cytosolic tail of p24 proteins. Interacts with AGD5 at trans-Golgi network. Interacts with A.tumefaciens AK6b.

It is found in the golgi apparatus. Its subcellular location is the endosome. It localises to the trans-Golgi network. The protein localises to the early endosome. It carries out the reaction GTP + H2O = GDP + phosphate + H(+). With respect to regulation, activated by AGD7 and AGD10. GTP-binding protein involved in protein trafficking; required for the sequence-specific vacuolar sorting route to the lytic vacuole, for the ER-to-Golgi transport and for the Golgi-derived transport to the plasma membrane. Involved in the recruitment of COPI and GDAP1 to membranes. Required for recycling of PIN auxin transporters (e.g. PIN1 and PIN2) in a fungal toxin brefeldin A (BFA)-dependent manner. Involved in various auxin-dependent developmental processes. The protein is ADP-ribosylation factor 1 of Arabidopsis thaliana (Mouse-ear cress).